A 539-amino-acid chain; its full sequence is Chaperonin GroEL (539 aa).

Residues 29-32 (TLGP), 86-90 (DGTTT), glycine 412, 475-477 (NAA), and aspartate 491 contribute to the ATP site.

The protein belongs to the chaperonin (HSP60) family. In terms of assembly, forms a cylinder of 14 subunits composed of two heptameric rings stacked back-to-back. Interacts with the co-chaperonin GroES.

The protein localises to the cytoplasm. The enzyme catalyses ATP + H2O + a folded polypeptide = ADP + phosphate + an unfolded polypeptide.. Together with its co-chaperonin GroES, plays an essential role in assisting protein folding. The GroEL-GroES system forms a nano-cage that allows encapsulation of the non-native substrate proteins and provides a physical environment optimized to promote and accelerate protein folding. This chain is Chaperonin GroEL, found in Tsukamurella tyrosinosolvens.